Consider the following 387-residue polypeptide: Type 2 DNA topoisomerase 6 subunit A (387 aa).

Residues 12-160 (EARKKAADTL…MLILSKEKGK (149 aa)) form the Topo IIA-type catalytic domain. Tyr106 acts as the O-(5'-phospho-DNA)-tyrosine intermediate in catalysis. Residues Glu207 and Asp259 each coordinate Mg(2+).

Belongs to the TOP6A family. Homodimer. Heterotetramer of two Top6A and two Top6B chains. It depends on Mg(2+) as a cofactor.

It carries out the reaction ATP-dependent breakage, passage and rejoining of double-stranded DNA.. Relaxes both positive and negative superturns and exhibits a strong decatenase activity. In Sulfurisphaera tokodaii (strain DSM 16993 / JCM 10545 / NBRC 100140 / 7) (Sulfolobus tokodaii), this protein is Type 2 DNA topoisomerase 6 subunit A.